We begin with the raw amino-acid sequence, 296 residues long: GTPase Era (296 aa).

An Era-type G domain is found at 3 to 170 (KSGFVTIVGR…KELMFKYIPE (168 aa)). The tract at residues 11 to 18 (GRPNVGKS) is G1. 11–18 (GRPNVGKS) is a binding site for GTP. Residues 37-41 (QTTRN) are G2. Residues 58–61 (DTPG) form a G3 region. GTP contacts are provided by residues 58-62 (DTPGI) and 120-123 (NKID). Residues 120 to 123 (NKID) are G4. The interval 149-151 (ISA) is G5. The KH type-2 domain occupies 201-278 (LSEEVPHGIA…YIRLWVKVKE (78 aa)).

Belongs to the TRAFAC class TrmE-Era-EngA-EngB-Septin-like GTPase superfamily. Era GTPase family. In terms of assembly, monomer.

It localises to the cytoplasm. It is found in the cell membrane. Functionally, an essential GTPase that binds both GDP and GTP, with rapid nucleotide exchange. Plays a role in 16S rRNA processing and 30S ribosomal subunit biogenesis and possibly also in cell cycle regulation and energy metabolism. The sequence is that of GTPase Era from Clostridium botulinum (strain 657 / Type Ba4).